The following is a 271-amino-acid chain: Chymotrypsin-like elastase family member 2A (271 aa).

Positions 1-16 are cleaved as a signal peptide; sequence MIRTLLLSALVAGALS. A propeptide spans 17–30 (activation peptide); that stretch reads CGYPTYEVEDDVSR. The 239-residue stretch at 31–269 folds into the Peptidase S1 domain; that stretch reads VVGGQEATPN…YIDWINSVMA (239 aa). A disulfide bond links C60 and C76. Residues H75 and D123 each act as charge relay system in the active site. Cystine bridges form between C157–C224, C188–C204, and C214–C245. The Charge relay system role is filled by S218.

It belongs to the peptidase S1 family. Elastase subfamily. As to quaternary structure, interacts with CPA1. Interacts with SERPINA1. In terms of tissue distribution, highly expressed in pancreas (at mRNA and protein levels). Also expressed in adrenal gland and small intestine.

It is found in the secreted. It carries out the reaction Preferential cleavage: Leu-|-Xaa, Met-|-Xaa and Phe-|-Xaa. Hydrolyzes elastin.. In terms of biological role, elastase that enhances insulin signaling and might have a physiologic role in cellular glucose metabolism. Circulates in plasma and reduces platelet hyperactivation, triggers both insulin secretion and degradation, and increases insulin sensitivity. The chain is Chymotrypsin-like elastase family member 2A from Mus musculus (Mouse).